A 66-amino-acid chain; its full sequence is Large ribosomal subunit protein uL29 (66 aa).

Belongs to the universal ribosomal protein uL29 family.

This chain is Large ribosomal subunit protein uL29, found in Methylibium petroleiphilum (strain ATCC BAA-1232 / LMG 22953 / PM1).